We begin with the raw amino-acid sequence, 517 residues long: GMP synthase [glutamine-hydrolyzing] (517 aa).

The Glutamine amidotransferase type-1 domain maps to 9–199 (RILILDFGSQ…VLGICGCERL (191 aa)). The active-site Nucleophile is the cysteine 86. Active-site residues include histidine 173 and glutamate 175. The 193-residue stretch at 200–392 (WTSESIIEDA…LGLPYEMLYR (193 aa)) folds into the GMPS ATP-PPase domain. 227-233 (SGGVDSS) is an ATP binding site.

In terms of assembly, homodimer.

It catalyses the reaction XMP + L-glutamine + ATP + H2O = GMP + L-glutamate + AMP + diphosphate + 2 H(+). It functions in the pathway purine metabolism; GMP biosynthesis; GMP from XMP (L-Gln route): step 1/1. Functionally, catalyzes the synthesis of GMP from XMP. The sequence is that of GMP synthase [glutamine-hydrolyzing] from Vibrio vulnificus (strain CMCP6).